The chain runs to 276 residues: Dermonecrotic toxin LarSicTox-alphaIB2c (276 aa).

His-5 is an active-site residue. Mg(2+)-binding residues include Glu-25 and Asp-27. His-41 acts as the Nucleophile in catalysis. Cystine bridges form between Cys-45–Cys-51 and Cys-47–Cys-190. Asp-85 is a binding site for Mg(2+). Asn-253 is a glycosylation site (N-linked (GlcNAc...) asparagine).

It belongs to the arthropod phospholipase D family. Class II subfamily. Mg(2+) is required as a cofactor. Expressed by the venom gland.

It localises to the secreted. The enzyme catalyses an N-(acyl)-sphingosylphosphocholine = an N-(acyl)-sphingosyl-1,3-cyclic phosphate + choline. It catalyses the reaction an N-(acyl)-sphingosylphosphoethanolamine = an N-(acyl)-sphingosyl-1,3-cyclic phosphate + ethanolamine. It carries out the reaction a 1-acyl-sn-glycero-3-phosphocholine = a 1-acyl-sn-glycero-2,3-cyclic phosphate + choline. The catalysed reaction is a 1-acyl-sn-glycero-3-phosphoethanolamine = a 1-acyl-sn-glycero-2,3-cyclic phosphate + ethanolamine. Functionally, dermonecrotic toxins cleave the phosphodiester linkage between the phosphate and headgroup of certain phospholipids (sphingolipid and lysolipid substrates), forming an alcohol (often choline) and a cyclic phosphate. This toxin acts on sphingomyelin (SM). It may also act on ceramide phosphoethanolamine (CPE), lysophosphatidylcholine (LPC) and lysophosphatidylethanolamine (LPE), but not on lysophosphatidylserine (LPS), and lysophosphatidylglycerol (LPG). It acts by transphosphatidylation, releasing exclusively cyclic phosphate products as second products. Induces dermonecrosis, hemolysis, increased vascular permeability, edema, inflammatory response, and platelet aggregation. This Loxosceles arizonica (Arizona brown spider) protein is Dermonecrotic toxin LarSicTox-alphaIB2c.